Consider the following 310-residue polypeptide: ATP-dependent protease (310 aa).

The 163-residue stretch at 24 to 186 folds into the Integrase catalytic domain; it reads RLNQCFFKFK…TPNQKEENYF (163 aa).

The protein is ATP-dependent protease of Lactococcus lactis subsp. lactis (Streptococcus lactis).